The primary structure comprises 287 residues: Phosphatidylinositol transfer protein 5 (287 aa).

The tract at residues Phe252–Lys287 is disordered. Low complexity predominate over residues Asn254–Asn270. Residues Thr271–Lys287 show a composition bias toward polar residues.

The protein belongs to the PtdIns transfer protein family. PI transfer class IIA subfamily.

Functionally, phosphatidylinositol transfer proteins mediate the monomeric transport of lipids by shielding a lipid from the aqueous environment and binding the lipid in a hydrophobic cavity. This is Phosphatidylinositol transfer protein 5 (pitE) from Dictyostelium discoideum (Social amoeba).